Here is a 194-residue protein sequence, read N- to C-terminus: Small ribosomal subunit protein uS7 (194 aa).

Belongs to the universal ribosomal protein uS7 family. As to quaternary structure, part of the 30S ribosomal subunit.

In terms of biological role, one of the primary rRNA binding proteins, it binds directly to 16S rRNA where it nucleates assembly of the head domain of the 30S subunit. Is located at the subunit interface close to the decoding center. The sequence is that of Small ribosomal subunit protein uS7 from Methanospirillum hungatei JF-1 (strain ATCC 27890 / DSM 864 / NBRC 100397 / JF-1).